The primary structure comprises 222 residues: Small ribosomal subunit protein uS3 (222 aa).

Positions 38 to 106 (IRKFISEKLA…NVHINIVEIK (69 aa)) constitute a KH type-2 domain.

The protein belongs to the universal ribosomal protein uS3 family. As to quaternary structure, part of the 30S ribosomal subunit. Forms a tight complex with proteins S10 and S14.

Its function is as follows. Binds the lower part of the 30S subunit head. Binds mRNA in the 70S ribosome, positioning it for translation. This chain is Small ribosomal subunit protein uS3, found in Lactobacillus gasseri (strain ATCC 33323 / DSM 20243 / BCRC 14619 / CIP 102991 / JCM 1131 / KCTC 3163 / NCIMB 11718 / NCTC 13722 / AM63).